The following is a 169-amino-acid chain: Lipoprotein signal peptidase (169 aa).

2 helical membrane passes run 56–76 and 84–104; these read FLPP…VIIY and QPLF…NLID. Active-site residues include Asp-113 and Asp-139. The chain crosses the membrane as a helical span at residues 132–152; the sequence is WPIFNIADSAITIGACMLIIF.

Belongs to the peptidase A8 family.

Its subcellular location is the cell inner membrane. It catalyses the reaction Release of signal peptides from bacterial membrane prolipoproteins. Hydrolyzes -Xaa-Yaa-Zaa-|-(S,diacylglyceryl)Cys-, in which Xaa is hydrophobic (preferably Leu), and Yaa (Ala or Ser) and Zaa (Gly or Ala) have small, neutral side chains.. Its pathway is protein modification; lipoprotein biosynthesis (signal peptide cleavage). This protein specifically catalyzes the removal of signal peptides from prolipoproteins. This chain is Lipoprotein signal peptidase, found in Chlorobium phaeovibrioides (strain DSM 265 / 1930) (Prosthecochloris vibrioformis (strain DSM 265)).